Reading from the N-terminus, the 453-residue chain is F-box protein SKIP14 (453 aa).

In terms of domain architecture, F-box; degenerate spans 34–104 (RKNTGGDASS…NRQQLFAGLS (71 aa)).

Part of a SCF (ASK-cullin-F-box) protein ligase complex. Interacts with CUL1, SKP1A/ASK1 and SPK1B/ASK2.

Its pathway is protein modification; protein ubiquitination. In terms of biological role, component of SCF(ASK-cullin-F-box) E3 ubiquitin ligase complexes, which may mediate the ubiquitination and subsequent proteasomal degradation of target proteins. This Arabidopsis thaliana (Mouse-ear cress) protein is F-box protein SKIP14 (SKIP14).